Consider the following 422-residue polypeptide: Vitamin D3 receptor (422 aa).

Residues 22-90 (PRICGVCGDK…RLKRCVDIGM (69 aa)) constitute a DNA-binding region (nuclear receptor). Zn(2+) contacts are provided by Cys25, Cys28, Cys42, Cys45, Cys61, Cys67, Cys77, and Cys80. 2 NR C4-type zinc fingers span residues 25–45 (CGVCGDKATGFHFNAMTCEGC) and 61–85 (CPFNGDCRITKDNRRHCQSCRLKRC). Residues 98 to 127 (DEEVQRKRQMINKRKSEEALKESMRPKISD) form a hinge region. Positions 128–418 (EQQKMIDILL…LTPLMLEVFS (291 aa)) constitute an NR LBD domain. Residues 170-191 (RSSSVHTQGSPSEDSDVFTSSP) are disordered. Ser232 is a calcitriol binding site. Residues 241–259 (KMIPGFRDLIAEDQIALLK) are interaction with coactivator LXXLL motif. Residues Arg269, Ser273, His300, and His392 each coordinate calcitriol. A 9aaTAD motif is present at residues 411 to 419 (PLMLEVFSD).

It belongs to the nuclear hormone receptor family. NR1 subfamily. Homodimer in the absence of bound vitamin D3. Heterodimer with RXRA after vitamin D3 binding. Detected in all tissues examined. Highest level in small intestine and skin.

It is found in the nucleus. It localises to the cytoplasm. Its function is as follows. Nuclear receptor for calcitriol, the active form of vitamin D3 which mediates the action of this vitamin on cells. Enters the nucleus upon vitamin D3 binding where it forms heterodimers with the retinoid X receptor/RXR. The VDR-RXR heterodimers bind to specific response elements on DNA and activate the transcription of vitamin D3-responsive target genes. Plays a central role in calcium homeostasis. Also functions as a receptor for the secondary bile acid lithocholic acid (LCA) and its metabolites. The sequence is that of Vitamin D3 receptor (vdr) from Xenopus laevis (African clawed frog).